Here is a 458-residue protein sequence, read N- to C-terminus: Siroheme synthase (458 aa).

The interval 1–203 (MDYLPLFFDL…GNLAAAEQLI (203 aa)) is precorrin-2 dehydrogenase /sirohydrochlorin ferrochelatase. Residues 22–23 (TI) and 43–44 (PK) each bind NAD(+). The residue at position 128 (Ser128) is a Phosphoserine. The tract at residues 216-458 (GEVYLVGAGP…RCHEKLNWYK (243 aa)) is uroporphyrinogen-III C-methyltransferase. Pro225 provides a ligand contact to S-adenosyl-L-methionine. Residue Asp248 is the Proton acceptor of the active site. Lys270 acts as the Proton donor in catalysis. S-adenosyl-L-methionine contacts are provided by residues 301-303 (GGD), Ile306, 331-332 (TA), Met383, and Gly412.

In the N-terminal section; belongs to the precorrin-2 dehydrogenase / sirohydrochlorin ferrochelatase family. This sequence in the C-terminal section; belongs to the precorrin methyltransferase family.

It catalyses the reaction uroporphyrinogen III + 2 S-adenosyl-L-methionine = precorrin-2 + 2 S-adenosyl-L-homocysteine + H(+). It carries out the reaction precorrin-2 + NAD(+) = sirohydrochlorin + NADH + 2 H(+). The catalysed reaction is siroheme + 2 H(+) = sirohydrochlorin + Fe(2+). Its pathway is cofactor biosynthesis; adenosylcobalamin biosynthesis; precorrin-2 from uroporphyrinogen III: step 1/1. The protein operates within cofactor biosynthesis; adenosylcobalamin biosynthesis; sirohydrochlorin from precorrin-2: step 1/1. It functions in the pathway porphyrin-containing compound metabolism; siroheme biosynthesis; precorrin-2 from uroporphyrinogen III: step 1/1. It participates in porphyrin-containing compound metabolism; siroheme biosynthesis; siroheme from sirohydrochlorin: step 1/1. Its pathway is porphyrin-containing compound metabolism; siroheme biosynthesis; sirohydrochlorin from precorrin-2: step 1/1. Functionally, multifunctional enzyme that catalyzes the SAM-dependent methylations of uroporphyrinogen III at position C-2 and C-7 to form precorrin-2 via precorrin-1. Then it catalyzes the NAD-dependent ring dehydrogenation of precorrin-2 to yield sirohydrochlorin. Finally, it catalyzes the ferrochelation of sirohydrochlorin to yield siroheme. In Saccharophagus degradans (strain 2-40 / ATCC 43961 / DSM 17024), this protein is Siroheme synthase.